The chain runs to 395 residues: Chorismate synthase (395 aa).

Residues Arg-40 and Arg-46 each contribute to the NADP(+) site. Residues 135-137 and 256-257 each bind FMN; these read RAS and QA. Residues 272 to 283 are compositionally biased toward basic and acidic residues; the sequence is RRGSQAHDEMRP. The segment at 272 to 296 is disordered; the sequence is RRGSQAHDEMRPGPDGILRSTNRAG. Residues Gly-300, 315–319, and Arg-341 each bind FMN; that span reads KPIST.

This sequence belongs to the chorismate synthase family. Homotetramer. It depends on FMNH2 as a cofactor.

The catalysed reaction is 5-O-(1-carboxyvinyl)-3-phosphoshikimate = chorismate + phosphate. Its pathway is metabolic intermediate biosynthesis; chorismate biosynthesis; chorismate from D-erythrose 4-phosphate and phosphoenolpyruvate: step 7/7. Functionally, catalyzes the anti-1,4-elimination of the C-3 phosphate and the C-6 proR hydrogen from 5-enolpyruvylshikimate-3-phosphate (EPSP) to yield chorismate, which is the branch point compound that serves as the starting substrate for the three terminal pathways of aromatic amino acid biosynthesis. This reaction introduces a second double bond into the aromatic ring system. In Rhodococcus jostii (strain RHA1), this protein is Chorismate synthase.